Reading from the N-terminus, the 857-residue chain is KH domain-containing protein HEN4 (857 aa).

Residues Met1–Gly15 show a composition bias toward basic and acidic residues. The tract at residues Met1 to Lys27 is disordered. KH domains lie at His46–Ala110, Thr149–Ile217, Asp451–Ile521, and Ser541–Ile610. The disordered stretch occupies residues Ser644–Leu755. Polar residues-rich tracts occupy residues Asp645 to Ser665 and Ser673 to Val688. Positions Phe718 to Thr730 are enriched in basic and acidic residues. Positions Arg746–Leu755 are enriched in low complexity. Residues Asn775–Leu839 enclose the KH 5 domain.

Interacts with HUA1. Interacts with FLK and PEP.

The protein resides in the nucleus speckle. In terms of biological role, functions in floral reproductive organ identity in the third whorl and floral determinacy specification by specifically promoting the processing of AGAMOUS (AG) pre-mRNA. Functions in association with HUA1 and HUA2. This Arabidopsis thaliana (Mouse-ear cress) protein is KH domain-containing protein HEN4.